The sequence spans 172 residues: Large ribosomal subunit protein uL10 (172 aa).

It belongs to the universal ribosomal protein uL10 family. Part of the ribosomal stalk of the 50S ribosomal subunit. The N-terminus interacts with L11 and the large rRNA to form the base of the stalk. The C-terminus forms an elongated spine to which L12 dimers bind in a sequential fashion forming a multimeric L10(L12)X complex.

Functionally, forms part of the ribosomal stalk, playing a central role in the interaction of the ribosome with GTP-bound translation factors. This is Large ribosomal subunit protein uL10 from Prosthecochloris aestuarii (strain DSM 271 / SK 413).